Reading from the N-terminus, the 284-residue chain is Acetyl-coenzyme A carboxylase carboxyl transferase subunit beta (284 aa).

Positions 27 to 284 constitute a CoA carboxyltransferase N-terminal domain; sequence LMTKCPSCKY…ELHDGGVRHV (258 aa). Residues cysteine 31, cysteine 34, cysteine 50, and cysteine 52 each contribute to the Zn(2+) site. The C4-type zinc-finger motif lies at 31-52; that stretch reads CPSCKYMHYTKQLNENHKVCDC.

It belongs to the AccD/PCCB family. As to quaternary structure, acetyl-CoA carboxylase is a heterohexamer composed of biotin carboxyl carrier protein (AccB), biotin carboxylase (AccC) and two subunits each of ACCase subunit alpha (AccA) and ACCase subunit beta (AccD). Zn(2+) serves as cofactor.

It localises to the cytoplasm. The catalysed reaction is N(6)-carboxybiotinyl-L-lysyl-[protein] + acetyl-CoA = N(6)-biotinyl-L-lysyl-[protein] + malonyl-CoA. It participates in lipid metabolism; malonyl-CoA biosynthesis; malonyl-CoA from acetyl-CoA: step 1/1. In terms of biological role, component of the acetyl coenzyme A carboxylase (ACC) complex. Biotin carboxylase (BC) catalyzes the carboxylation of biotin on its carrier protein (BCCP) and then the CO(2) group is transferred by the transcarboxylase to acetyl-CoA to form malonyl-CoA. The polypeptide is Acetyl-coenzyme A carboxylase carboxyl transferase subunit beta (Exiguobacterium sp. (strain ATCC BAA-1283 / AT1b)).